The chain runs to 370 residues: Muconate cycloisomerase 1 (370 aa).

Lys-166 is an active-site residue. Mn(2+) is bound by residues Asp-195, Glu-221, and Asp-246.

Belongs to the mandelate racemase/muconate lactonizing enzyme family. As to quaternary structure, homooctamer. Mn(2+) serves as cofactor.

It catalyses the reaction (S)-muconolactone = cis,cis-muconate + H(+). Its pathway is aromatic compound metabolism; beta-ketoadipate pathway; 5-oxo-4,5-dihydro-2-furylacetate from catechol: step 2/3. Its function is as follows. Catalyzes a syn cycloisomerization. In Acinetobacter baylyi (strain ATCC 33305 / BD413 / ADP1), this protein is Muconate cycloisomerase 1 (catB).